Reading from the N-terminus, the 242-residue chain is Uridylate kinase (242 aa).

13 to 16 (KLSG) is an ATP binding site. Gly55 contacts UMP. ATP-binding residues include Gly56 and Arg60. Residues Asp75 and 136–143 (TGNPFFTT) each bind UMP. ATP contacts are provided by Thr163, Tyr169, and Asp172.

It belongs to the UMP kinase family. As to quaternary structure, homohexamer.

Its subcellular location is the cytoplasm. It carries out the reaction UMP + ATP = UDP + ADP. It functions in the pathway pyrimidine metabolism; CTP biosynthesis via de novo pathway; UDP from UMP (UMPK route): step 1/1. Its activity is regulated as follows. Inhibited by UTP. Functionally, catalyzes the reversible phosphorylation of UMP to UDP. In Zymomonas mobilis subsp. mobilis (strain ATCC 31821 / ZM4 / CP4), this protein is Uridylate kinase.